We begin with the raw amino-acid sequence, 282 residues long: NH(3)-dependent NAD(+) synthetase (282 aa).

51 to 58 (GISGGVDS) lines the ATP pocket. Aspartate 57 contacts Mg(2+). Arginine 148 is a binding site for deamido-NAD(+). Threonine 168 is an ATP binding site. Position 173 (glutamate 173) interacts with Mg(2+). Residues lysine 181 and aspartate 188 each coordinate deamido-NAD(+). ATP-binding residues include lysine 197 and threonine 219. 268 to 269 (HK) is a deamido-NAD(+) binding site.

Belongs to the NAD synthetase family. As to quaternary structure, homodimer.

The enzyme catalyses deamido-NAD(+) + NH4(+) + ATP = AMP + diphosphate + NAD(+) + H(+). Its pathway is cofactor biosynthesis; NAD(+) biosynthesis; NAD(+) from deamido-NAD(+) (ammonia route): step 1/1. In terms of biological role, catalyzes the ATP-dependent amidation of deamido-NAD to form NAD. Uses ammonia as a nitrogen source. This chain is NH(3)-dependent NAD(+) synthetase, found in Burkholderia cenocepacia (strain ATCC BAA-245 / DSM 16553 / LMG 16656 / NCTC 13227 / J2315 / CF5610) (Burkholderia cepacia (strain J2315)).